Reading from the N-terminus, the 56-residue chain is MDRRLLEILACPICKGKLVYSQDEQELICRFDKLVYPIHDGIPVMLPDSTRPLIER.

It belongs to the UPF0434 family.

The chain is UPF0434 protein CbuG_1535 from Coxiella burnetii (strain CbuG_Q212) (Coxiella burnetii (strain Q212)).